Reading from the N-terminus, the 561-residue chain is AT-rich interactive domain-containing protein 3B (561 aa).

The residue at position 1 (Met-1) is an N-acetylmethionine. Residues 1-17 (MEPLQQQQQQQQQQQKQ) are compositionally biased toward low complexity. 3 disordered regions span residues 1-36 (MEPL…QQMR), 53-122 (LSAT…SKYF), and 136-179 (PMSN…WNLD). Ser-89 is subject to Phosphoserine. Residues 90–109 (EPEEEDGGLEDEDGDDEVAE) are compositionally biased toward acidic residues. Basic and acidic residues predominate over residues 152-162 (QAKEDHTKDAS). The segment covering 164-178 (ASPSVSTAGQPNWNL) has biased composition (polar residues). Ser-165 is modified (phosphoserine). The interaction with RB1 stretch occupies residues 203-365 (SRDFAKLYEL…SPPKIRFPIL (163 aa)). An ARID domain is found at 215 to 307 (DPERKEFLDD…YLYAYECEKK (93 aa)). Ser-311 carries the post-translational modification Phosphoserine. Arg-361 carries the asymmetric dimethylarginine modification. Positions 370–397 (SSGTNTSSPRISPATTLRKGDGAPVTTV) are disordered. An REKLES domain is found at 419–517 (AALEQLRERL…GVLFAQKPVV (99 aa)). The interaction with ARID3A stretch occupies residues 490–513 (SSIGSINMSVDIDGTTYAGVLFAQ). The span at 523-552 (SAPQSLGSSASSSSSSHCSPSPTSSRGTPS) shows a compositional bias: low complexity. A disordered region spans residues 523 to 561 (SAPQSLGSSASSSSSSHCSPSPTSSRGTPSAEPSTSWSL).

Heterodimer with ARID3A. Interacts with unphosphorylated RB1. In terms of tissue distribution, expressed in placenta, testis and leukocytes. Expressed in neuroblastoma. Present in K-562 erythrocytic leukemia cell line (at protein level).

It localises to the nucleus. Functionally, transcription factor which may be involved in neuroblastoma growth and malignant transformation. Favors nuclear targeting of ARID3A. The polypeptide is AT-rich interactive domain-containing protein 3B (ARID3B) (Homo sapiens (Human)).